The sequence spans 224 residues: UPF0758 protein lwe1562 (224 aa).

The MPN domain occupies 102-224 (VIRCPDDAVK…YISLKEKGYF (123 aa)). His173, His175, and Asp186 together coordinate Zn(2+). A JAMM motif motif is present at residues 173-186 (HNHPSGDPTPSSED).

The protein belongs to the UPF0758 family.

This Listeria welshimeri serovar 6b (strain ATCC 35897 / DSM 20650 / CCUG 15529 / CIP 8149 / NCTC 11857 / SLCC 5334 / V8) protein is UPF0758 protein lwe1562.